The sequence spans 461 residues: uncharacterized protein (461 aa).

Residues 86 to 127 are disordered; that stretch reads KMKPNKDDDEEEDEDDEDDEDDEEEDNEEEDNEEENEITIAP. Over residues 92-122 the composition is skewed to acidic residues; the sequence is DDDEEEDEDDEDDEDDEEEDNEEEDNEEENE. Coiled-coil stretches lie at residues 95-123 and 405-459; these read EEEDEDDEDDEDDEEEDNEEEDNEEENEI and NKYI…KLKK.

The protein belongs to the mimivirus L5 family.

This is an uncharacterized protein from Acanthamoeba polyphaga mimivirus (APMV).